A 509-amino-acid chain; its full sequence is Dihydrolipoyl dehydrogenase, mitochondrial (509 aa).

Residues 1–35 (MQSWSRVYCSLAKRGHFNRISHGLQGLSAVPLRTY) constitute a mitochondrion transit peptide. Residue K66 is modified to N6-acetyllysine; alternate. N6-succinyllysine; alternate is present on K66. Residues 71-80 (EKNETLGGTC) and K89 contribute to the FAD site. A disulfide bond links C80 and C85. N6-acetyllysine; alternate occurs at positions 104, 122, 132, and 143. An N6-succinyllysine; alternate mark is found at K104, K122, K132, and K143. FAD is bound at residue G154. N6-succinyllysine occurs at positions 159 and 166. 183 to 185 (TGS) contributes to the FAD binding site. NAD(+)-binding positions include 220-227 (GAGVIGVE) and E243. N6-succinyllysine occurs at positions 273 and 277. An NAD(+)-binding site is contributed by V278. Phosphoserine is present on residues S285 and S297. G314 contributes to the NAD(+) binding site. The residue at position 346 (K346) is an N6-acetyllysine. FAD contacts are provided by residues D355 and 361–364 (MLAH). The residue at position 410 (K410) is an N6-acetyllysine; alternate. K410 carries the post-translational modification N6-succinyllysine; alternate. K417 and K420 each carry N6-acetyllysine. K430 is modified (N6-succinyllysine). Residue H487 is the Proton acceptor of the active site. A Phosphoserine modification is found at S502. N6-acetyllysine; alternate is present on K505. An N6-succinyllysine; alternate modification is found at K505.

It belongs to the class-I pyridine nucleotide-disulfide oxidoreductase family. In terms of assembly, homodimer. Part of the multimeric pyruvate dehydrogenase complex that contains multiple copies of pyruvate dehydrogenase (subunits PDHA (PDHA1 or PDHA2) and PDHB, E1), dihydrolipoamide acetyltransferase (DLAT, E2) and lipoamide dehydrogenase (DLD, E3). These subunits are bound to an inner core composed of about 48 DLAT and 12 PDHX molecules (by non covalent bonds). The 2-oxoglutarate dehydrogenase complex is composed of OGDH (2-oxoglutarate dehydrogenase; E1), DLST (dihydrolipoamide succinyltransferase; E2), DLD (dihydrolipoamide dehydrogenase; E3) and the assembly factor KGD4. It contains multiple copies of the three enzymatic components (E1, E2 and E3). In the nucleus, the 2-oxoglutarate dehydrogenase complex associates with KAT2A. Interacts with PDHX. The cofactor is FAD. In terms of processing, tyrosine phosphorylated.

The protein resides in the mitochondrion matrix. Its subcellular location is the nucleus. The protein localises to the cell projection. It localises to the cilium. It is found in the flagellum. The protein resides in the cytoplasmic vesicle. Its subcellular location is the secretory vesicle. The protein localises to the acrosome. It carries out the reaction N(6)-[(R)-dihydrolipoyl]-L-lysyl-[protein] + NAD(+) = N(6)-[(R)-lipoyl]-L-lysyl-[protein] + NADH + H(+). Its function is as follows. Lipoamide dehydrogenase is a component of the glycine cleavage system as well as an E3 component of three alpha-ketoacid dehydrogenase complexes (pyruvate-, alpha-ketoglutarate-, and branched-chain amino acid-dehydrogenase complex). The 2-oxoglutarate dehydrogenase complex is mainly active in the mitochondrion. A fraction of the 2-oxoglutarate dehydrogenase complex also localizes in the nucleus and is required for lysine succinylation of histones: associates with KAT2A on chromatin and provides succinyl-CoA to histone succinyltransferase KAT2A. In monomeric form may have additional moonlighting function as serine protease. Involved in the hyperactivation of spermatazoa during capacitation and in the spermatazoal acrosome reaction. The polypeptide is Dihydrolipoyl dehydrogenase, mitochondrial (DLD) (Pongo abelii (Sumatran orangutan)).